We begin with the raw amino-acid sequence, 423 residues long: Imidazolonepropionase (423 aa).

Fe(3+) is bound by residues H78 and H80. Residues H78 and H80 each contribute to the Zn(2+) site. Residues R87, Y150, and H183 each coordinate 4-imidazolone-5-propanoate. Residue Y150 coordinates N-formimidoyl-L-glutamate. Residue H247 participates in Fe(3+) binding. H247 contributes to the Zn(2+) binding site. E250 lines the 4-imidazolone-5-propanoate pocket. D322 is a binding site for Fe(3+). Residue D322 participates in Zn(2+) binding. Residues N324 and G326 each contribute to the N-formimidoyl-L-glutamate site. S327 provides a ligand contact to 4-imidazolone-5-propanoate.

It belongs to the metallo-dependent hydrolases superfamily. HutI family. Requires Zn(2+) as cofactor. Fe(3+) is required as a cofactor.

The protein resides in the cytoplasm. It catalyses the reaction 4-imidazolone-5-propanoate + H2O = N-formimidoyl-L-glutamate. The protein operates within amino-acid degradation; L-histidine degradation into L-glutamate; N-formimidoyl-L-glutamate from L-histidine: step 3/3. In terms of biological role, catalyzes the hydrolytic cleavage of the carbon-nitrogen bond in imidazolone-5-propanoate to yield N-formimidoyl-L-glutamate. It is the third step in the universal histidine degradation pathway. This chain is Imidazolonepropionase, found in Bacillus cereus (strain ATCC 10987 / NRS 248).